The chain runs to 194 residues: Inosine triphosphate pyrophosphatase (194 aa).

An ITP-binding site is contributed by 10-15 (TGNANK). Glu41 is a binding site for Mg(2+). ITP is bound by residues Lys54, 72–73 (DT), Lys89, 147–150 (FGWD), Lys172, and 177–178 (QR).

This sequence belongs to the HAM1 NTPase family. In terms of assembly, homodimer. It depends on Mg(2+) as a cofactor. The cofactor is Mn(2+).

It localises to the cytoplasm. The protein resides in the nucleus. It carries out the reaction ITP + H2O = IMP + diphosphate + H(+). The enzyme catalyses dITP + H2O = dIMP + diphosphate + H(+). It catalyses the reaction XTP + H2O = XMP + diphosphate + H(+). Its function is as follows. Pyrophosphatase that hydrolyzes non-canonical purine nucleotides such as inosine triphosphate (ITP), deoxyinosine triphosphate (dITP) or xanthosine 5'-triphosphate (XTP) to their respective monophosphate derivatives. The enzyme does not distinguish between the deoxy- and ribose forms. Probably excludes non-canonical purines from RNA and DNA precursor pools, thus preventing their incorporation into RNA and DNA and avoiding chromosomal lesions. This chain is Inosine triphosphate pyrophosphatase, found in Kluyveromyces lactis (strain ATCC 8585 / CBS 2359 / DSM 70799 / NBRC 1267 / NRRL Y-1140 / WM37) (Yeast).